Here is a 182-residue protein sequence, read N- to C-terminus: UPF0397 protein BCAH187_A2708 (182 aa).

The next 5 membrane-spanning stretches (helical) occupy residues 9–29 (VVAI…GFSI), 40–60 (AILT…IGLI), 71–91 (WGIW…MGFI), 114–134 (ITGL…DIIV), and 142–162 (IVIQ…VLGL).

It belongs to the UPF0397 family.

The protein resides in the cell membrane. The protein is UPF0397 protein BCAH187_A2708 of Bacillus cereus (strain AH187).